Here is a 611-residue protein sequence, read N- to C-terminus: Protein KINASE OF THE OUTER CHLOROPLAST MEMBRANE 1 (611 aa).

Residues 1 to 555 (MASKIIAGKP…LEDFHWAVRP (555 aa)) are Cytoplasmic-facing. Positions 39-306 (LKLRHRIGRG…TDILLVLKSL (268 aa)) constitute a Protein kinase domain. ATP-binding positions include 45 to 53 (IGRGPFGDV) and Lys74. The helical transmembrane segment at 556–572 (LLIAMGLLTAMKLGICV) threads the bilayer. Topologically, residues 573–611 (RKKIGRSKDGKQRDGSTGQGDCKIPDGKGSDKSKWLVFF) are chloroplast intermembrane. The segment at 579 to 606 (SKDGKQRDGSTGQGDCKIPDGKGSDKSK) is disordered. A compositionally biased stretch (basic and acidic residues) spans 595-606 (KIPDGKGSDKSK).

The protein belongs to the protein kinase superfamily. Ser/Thr protein kinase family. In terms of assembly, associates with the TOC complex containing, at least, translocons at the chloroplast envelope (e.g. TOCs and TICs such as TOC159, TOC75, TOC33 and TIC56).

It is found in the plastid. The protein resides in the chloroplast outer membrane. It carries out the reaction L-seryl-[protein] + ATP = O-phospho-L-seryl-[protein] + ADP + H(+). It catalyses the reaction L-threonyl-[protein] + ATP = O-phospho-L-threonyl-[protein] + ADP + H(+). Serine/threonine protein kinase acting as a regulatory component of the plastid protein import machinery by phosphorylating import receptors (e.g. the A-domain of TOC159, TOC120 and TOC132). Supports preprotein import and contributes to efficient chloroplast biogenesis, thus being required for survival during de-etiolation. This is Protein KINASE OF THE OUTER CHLOROPLAST MEMBRANE 1 from Arabidopsis thaliana (Mouse-ear cress).